Here is a 588-residue protein sequence, read N- to C-terminus: BTB/POZ domain-containing protein At3g26490 (588 aa).

The BTB domain occupies 28-99 (NDLVIQVKST…CYGITITLCA (72 aa)). The NPH3 domain occupies 218–507 (RWWGEDLAEL…VQILFVEQAR (290 aa)). Phosphoserine occurs at positions 376 and 378. A Phosphotyrosine modification is found at Y448. The interval 529–554 (FTTRREEGGQEEEERDETKPSGGFLQ) is disordered.

It belongs to the NPH3 family.

It functions in the pathway protein modification; protein ubiquitination. Its function is as follows. May act as a substrate-specific adapter of an E3 ubiquitin-protein ligase complex (CUL3-RBX1-BTB) which mediates the ubiquitination and subsequent proteasomal degradation of target proteins. The protein is BTB/POZ domain-containing protein At3g26490 of Arabidopsis thaliana (Mouse-ear cress).